The chain runs to 1253 residues: Structural polyprotein (1253 aa).

Residues 43–77 form a host transcription inhibition region; it reads VQAQQMQQLISAVSALTTKQNGKAPKKPKKKPQKA. Positions 58-110 are disordered; sequence LTTKQNGKAPKKPKKKPQKAKAKKNEQQKKNENKKPPPKQKNPAKKKKPGKRE. Residues 66–79 show a composition bias toward basic residues; the sequence is APKKPKKKPQKAKA. Positions 70-106 match the Nuclear localization signal motif; that stretch reads PKKKPQKAKAKKNEQQKKNENKKPPPKQKNPAKKKKP. Positions 80-92 are enriched in basic and acidic residues; sequence KKNEQQKKNENKK. A binding to the viral RNA region spans residues 90–121; it reads NKKPPPKQKNPAKKKKPGKRERMCMKIENDCI. Positions 93-108 are enriched in basic residues; it reads PPPKQKNPAKKKKPGK. Residues 106-120 are ribosome-binding; it reads PGKRERMCMKIENDC. Cysteines 120 and 135 form a disulfide. Residues 120–268 enclose the Peptidase S3 domain; sequence CIFEVKLDGK…RYTPEGTEEW (149 aa). His146 functions as the Charge relay system in the catalytic mechanism. A Nuclear export signal motif is present at residues 151–161; it reads IDNPDLAKLTY. The segment at 162–167 is interaction with spike glycoprotein E2; it reads KKSSKY. Asp168 acts as the Charge relay system in catalysis. Positions 190 to 200 are dimerization of the capsid protein; that stretch reads PEGHYNWHHGA. Catalysis depends on Ser220, which acts as the Charge relay system. Positions 226 to 230 are dimerization of the capsid protein; sequence DNKGR. Positions 269-280 are functions as an uncleaved signal peptide for the precursor of protein E3/E2; it reads SAALMMCVLANV. Disulfide bonds link Cys275–Cys284, Cys289–Cys293, and Cys292–Cys324. An N-linked (GlcNAc...) asparagine; by host glycan is attached at Asn279. Residue Asn325 is glycosylated (N-linked (GlcNAc...) asparagine; by host). The Extracellular portion of the chain corresponds to 333 to 694; the sequence is SVTKHFNVYK…EIILYYYGLY (362 aa). Cystine bridges form between Cys351–Cys457, Cys354–Cys360, Cys423–Cys437, Cys485–Cys597, Cys533–Cys557, and Cys535–Cys552. Interaction with host Mxra8 receptor stretches follow at residues 358-361 and 394-396; these read QFCY and HEH. Residues 516–519 form an interaction with host Mxra8 receptor region; sequence QSGN. Asn532 carries an N-linked (GlcNAc...) asparagine; by host glycan. The interval 548–554 is interaction with host Mxra8 receptor; the sequence is TINSCKI. Asn594 is a glycosylation site (N-linked (GlcNAc...) asparagine; by host). Residues 695–715 traverse the membrane as a helical segment; sequence PAATIAAVSAAGLAVVLSLLA. At 716–754 the chain is on the cytoplasmic side; sequence SCYMFATARRKCLTPYALTPGAVVPVTLGVLCCAPRAHA. The S-stearoyl cysteine; by host moiety is linked to residue Cys717. The segment at 722–726 is interaction with the capsid protein; that stretch reads TARRK. Cys727 carries the S-stearoyl cysteine; by host lipid modification. A transient transmembrane before p62-6K protein processing region spans residues 727–747; it reads CLTPYALTPGAVVPVTLGVLC. A disulfide bond links Cys727 and Cys748. S-palmitoyl cysteine; by host attachment occurs at residues Cys747 and Cys748. Residues 755-769 are Extracellular-facing; sequence ASFAESMAYLWDENQ. Residue Asn768 is glycosylated (N-linked (GlcNAc...) asparagine; by host). The helical transmembrane segment at 770-790 threads the bilayer; the sequence is TLFWLELATPLAAIIILVCCL. Topologically, residues 791–792 are cytoplasmic; that stretch reads KN. A helical membrane pass occupies residues 793–813; sequence LLCCCKPLSFLVLVSLGTPVV. 2 consecutive stretches face the extracellular side: residues 814-815 and 826-1227; these read KS and VGFP…WVQR. 4 disulfide bridges follow: Cys864–Cys929, Cys877–Cys909, Cys878–Cys911, and Cys883–Cys893. An E1 fusion peptide loop region spans residues 899 to 916; sequence VYPFMWGGAYCFCDTENT. N-linked (GlcNAc...) asparagine; by host glycans are attached at residues Asn956 and Asn1085. Disulfide bonds link Cys1074–Cys1086, Cys1116–Cys1191, Cys1121–Cys1195, and Cys1143–Cys1185. Residues 1228–1248 traverse the membrane as a helical segment; that stretch reads VAGGLGGLTLAAVAVLILVTC. Residue Cys1248 is the site of S-palmitoyl cysteine; by host attachment. Topologically, residues 1249 to 1253 are cytoplasmic; that stretch reads VTMRR.

Homodimer. Homomultimer. Interacts with host karyopherin KPNA4; this interaction allows the nuclear import of the viral capsid protein. Interacts with spike glycoprotein E2. Interacts with host IRAK1; the interaction leads to inhibition of IRAK1-dependent signaling. In terms of assembly, the precursor of protein E3/E2 and E1 form a heterodimer shortly after synthesis. As to quaternary structure, interacts with spike glycoprotein E2. The precursor of protein E3/E2 and E1 form a heterodimer shortly after synthesis. Processing of the precursor of protein E3/E2 into E2 and E3 results in a heterodimer of the spike glycoproteins E2 and E1. Spike at virion surface are constituted of a trimer of E2-E1 heterodimers. After target cell attachment and endocytosis, E1 change conformation to form homotrimers. Interacts with 6K protein. E1/E2 heterodimer interacts with host LDLR. Interacts with spike glycoprotein E1. Processing of the precursor of protein E3/E2 into E2 and E3 results in a heterodimer of the spike glycoproteins E2 and E1. Spike at virion surface are constituted of a trimer of E2-E1 heterodimers. Interacts with 6K protein. Interacts with host MXRA8; this interaction mediates virus entry. In terms of assembly, oligomer. Interacts with spike glycoprotein E1. Interacts with spike glycoprotein E2. In terms of processing, structural polyprotein: Specific enzymatic cleavages in vivo yield mature proteins. Capsid protein is auto-cleaved during polyprotein translation, unmasking a signal peptide at the N-terminus of the precursor of E3/E2. The remaining polyprotein is then targeted to the host endoplasmic reticulum, where host signal peptidase cleaves it into pE2, 6K and E1 proteins. pE2 is further processed to mature E3 and E2 by host furin in trans-Golgi vesicle. Post-translationally, palmitoylated via thioester bonds. These palmitoylations may induce disruption of the C-terminus transmembrane. This would result in the reorientation of E2 C-terminus from lumenal to cytoplasmic side. N-glycosylated. In terms of processing, palmitoylated via thioester bonds.

It is found in the virion. The protein localises to the host cytoplasm. The protein resides in the host cell membrane. Its subcellular location is the host nucleus. It localises to the virion membrane. It is found in the host Golgi apparatus. The protein localises to the host trans-Golgi network. The protein resides in the host endoplasmic reticulum. The enzyme catalyses Autocatalytic release of the core protein from the N-terminus of the togavirus structural polyprotein by hydrolysis of a -Trp-|-Ser- bond.. Forms an icosahedral capsid with a T=4 symmetry composed of 240 copies of the capsid protein surrounded by a lipid membrane through which penetrate 80 spikes composed of trimers of E1-E2 heterodimers. The capsid protein binds to the viral RNA genome at a site adjacent to a ribosome binding site for viral genome translation following genome release. Possesses a protease activity that results in its autocatalytic cleavage from the nascent structural protein. Following its self-cleavage, the capsid protein transiently associates with ribosomes, and within several minutes the protein binds to viral RNA and rapidly assembles into icosahedric core particles. The resulting nucleocapsid eventually associates with the cytoplasmic domain of the spike glycoprotein E2 at the cell membrane, leading to budding and formation of mature virions. In case of infection, new virions attach to target cells and after clathrin-mediated endocytosis their membrane fuses with the host endosomal membrane. This leads to the release of the nucleocapsid into the cytoplasm, followed by an uncoating event necessary for the genomic RNA to become accessible. The uncoating might be triggered by the interaction of capsid proteins with ribosomes. Binding of ribosomes would release the genomic RNA since the same region is genomic RNA-binding and ribosome-binding. Specifically inhibits interleukin-1 receptor-associated kinase 1/IRAK1-dependent signaling during viral entry, representing a means by which the alphaviruses may evade innate immune detection and activation prior to viral gene expression. Its function is as follows. Provides the signal sequence for the translocation of the precursor of protein E3/E2 to the host endoplasmic reticulum. Furin-cleaved E3 remains associated with spike glycoprotein E1 and mediates pH protection of the latter during the transport via the secretory pathway. After virion release from the host cell, the assembly protein E3 is gradually released in the extracellular space. Functionally, plays a role in viral attachment to target host cell, by binding to the cell receptor MXRA8. The host LDLR may also act as a cell receptor for viral entry. Synthesized as a p62 precursor which is processed by furin at the cell membrane just before virion budding, giving rise to E2-E1 heterodimer. The p62-E1 heterodimer is stable, whereas E2-E1 is unstable and dissociate at low pH. p62 is processed at the last step, presumably to avoid E1 fusion activation before its final export to cell surface. E2 C-terminus contains a transitory transmembrane that would be disrupted by palmitoylation, resulting in reorientation of the C-terminal tail from lumenal to cytoplasmic side. This step is critical since E2 C-terminus is involved in budding by interacting with capsid proteins. This release of E2 C-terminus in cytoplasm occurs lately in protein export, and precludes premature assembly of particles at the endoplasmic reticulum membrane. In terms of biological role, acts as a viroporin that participates in virus glycoprotein processing and transport to the plasma membrane, cell permeabilization and budding of viral particles. Disrupts the calcium homeostasis of the cell, probably at the endoplasmic reticulum level. This leads to cytoplasmic calcium elevation. Because of its lipophilic properties, the 6K protein is postulated to influence the selection of lipids that interact with the transmembrane domains of the glycoproteins, which, in turn, affects the deformability of the bilayer required for the extreme curvature that occurs as budding proceeds. Present in low amount in virions, about 3% compared to viral glycoproteins. Class II viral fusion protein. Fusion activity is inactive as long as E1 is bound to E2 in mature virion. After virus attachment to target cell via host MXRA8 and endocytosis, acidification of the endosome induce dissociation of E1/E2 heterodimer and concomitant trimerization of the E1 subunits. This E1 trimer is fusion active, and promotes release of viral nucleocapsid in cytoplasm after endosome and viral membrane fusion. Efficient fusion requires the presence of cholesterol and sphingolipid in the target membrane. The chain is Structural polyprotein from Aedes vexans (Inland floodwater mosquito).